A 219-amino-acid chain; its full sequence is MSIQVFCDFDGTITNNDNIMSIMEKFAPPEAEEIKQKILSQELSIQEGVSQLFRLIPINLHDDIIQFLQETAEIRTGFHEFIQFINENNISFYVISGGMDFFVYPLLQEIIPKEQIYCNATDFSGEFVEVKWPHPCDEQCQHSCGLCKSSLIRKLSSKDDFHIVIGDSITDLQATKQADKVFARDFLITKCEENRIAYTPFETFHDVLAELKHLLEVKL.

It belongs to the HAD-like hydrolase superfamily. MtnX family.

It carries out the reaction 2-hydroxy-5-methylsulfanyl-3-oxopent-1-enyl phosphate + H2O = 1,2-dihydroxy-5-(methylsulfanyl)pent-1-en-3-one + phosphate. It participates in amino-acid biosynthesis; L-methionine biosynthesis via salvage pathway; L-methionine from S-methyl-5-thio-alpha-D-ribose 1-phosphate: step 4/6. Dephosphorylates 2-hydroxy-3-keto-5-methylthiopentenyl-1-phosphate (HK-MTPenyl-1-P) yielding 1,2-dihydroxy-3-keto-5-methylthiopentene (DHK-MTPene). This Bacillus mycoides (strain KBAB4) (Bacillus weihenstephanensis) protein is 2-hydroxy-3-keto-5-methylthiopentenyl-1-phosphate phosphatase.